A 177-amino-acid polypeptide reads, in one-letter code: Nucleoside triphosphate/diphosphate phosphatase (177 aa).

Residue R23 is the Proton donor of the active site. Mg(2+) contacts are provided by N87, D103, D105, D107, D120, and E123.

It belongs to the Ntdp family. Mg(2+) is required as a cofactor.

It carries out the reaction a ribonucleoside 5'-triphosphate + H2O = a ribonucleoside 5'-diphosphate + phosphate + H(+). It catalyses the reaction a ribonucleoside 5'-diphosphate + H2O = a ribonucleoside 5'-phosphate + phosphate + H(+). Its function is as follows. Has nucleoside phosphatase activity towards nucleoside triphosphates and nucleoside diphosphates. The sequence is that of Nucleoside triphosphate/diphosphate phosphatase from Enterococcus faecalis (strain ATCC 700802 / V583).